We begin with the raw amino-acid sequence, 168 residues long: HTH-type transcriptional regulator IscR (168 aa).

Residues 2 to 131 form the HTH rrf2-type domain; sequence KLTSKGRYAV…NNITLGELMT (130 aa). Positions 28-51 form a DNA-binding region, H-T-H motif; sequence LADISERQGISLSYLEQLFSKLRK. 3 residues coordinate [2Fe-2S] cluster: C92, C98, and C104.

The cofactor is [2Fe-2S] cluster.

Regulates the transcription of several operons and genes involved in the biogenesis of Fe-S clusters and Fe-S-containing proteins. The protein is HTH-type transcriptional regulator IscR of Vibrio parahaemolyticus serotype O3:K6 (strain RIMD 2210633).